A 543-amino-acid polypeptide reads, in one-letter code: Putative cysteine ligase BshC (543 aa).

A coiled-coil region spans residues 419–440 (DEKNNDNIDEVVEEVKAQISDI).

Belongs to the BshC family.

Its function is as follows. Involved in bacillithiol (BSH) biosynthesis. May catalyze the last step of the pathway, the addition of cysteine to glucosamine malate (GlcN-Mal) to generate BSH. This Oceanobacillus iheyensis (strain DSM 14371 / CIP 107618 / JCM 11309 / KCTC 3954 / HTE831) protein is Putative cysteine ligase BshC.